Here is an 829-residue protein sequence, read N- to C-terminus: Telomere length regulation protein TEL2 homolog (829 aa).

2 disordered regions span residues 446-493 (SADF…DDLV) and 620-641 (SEKPSHETSAESGSVNTDPHSI). Positions 456–466 (SSPSKSPLSSP) are enriched in low complexity. Basic and acidic residues predominate over residues 467-480 (EVREKSKVKVKADQ). Over residues 482–493 (SDSDLDSDDDLV) the composition is skewed to acidic residues. The span at 629 to 641 (AESGSVNTDPHSI) shows a compositional bias: polar residues.

It belongs to the TEL2 family.

The protein localises to the cytoplasm. It localises to the membrane. The protein resides in the nucleus. It is found in the chromosome. Its subcellular location is the telomere. Regulator of the DNA damage response (DDR). Part of the TTT complex that is required to stabilize protein levels of the phosphatidylinositol 3-kinase-related protein kinase (PIKK) family proteins. Promotes assembly, stabilizes and maintains the activity of TORC complexes, which regulate cell growth and survival in response to nutrient and hormonal signals. May be involved in telomere length regulation. The sequence is that of Telomere length regulation protein TEL2 homolog (telo2) from Xenopus tropicalis (Western clawed frog).